A 109-amino-acid chain; its full sequence is uncharacterized protein (109 aa).

The HTH cro/C1-type domain occupies 42–100 (LEEKLKQEKIDRKYLAEVTNIPYTTVSRIMRAEANREFNPEIDTILKIAKYFNCTMDEV). The segment at residues 53-72 (RKYLAEVTNIPYTTVSRIMR) is a DNA-binding region (H-T-H motif).

This is an uncharacterized protein from Rickettsia conorii (strain ATCC VR-613 / Malish 7).